Here is a 235-residue protein sequence, read N- to C-terminus: Segregation and condensation protein A (235 aa).

It belongs to the ScpA family. As to quaternary structure, component of a cohesin-like complex composed of ScpA, ScpB and the Smc homodimer, in which ScpA and ScpB bind to the head domain of Smc. The presence of the three proteins is required for the association of the complex with DNA.

It is found in the cytoplasm. Participates in chromosomal partition during cell division. May act via the formation of a condensin-like complex containing Smc and ScpB that pull DNA away from mid-cell into both cell halves. This is Segregation and condensation protein A from Streptococcus agalactiae serotype Ia (strain ATCC 27591 / A909 / CDC SS700).